Here is a 59-residue protein sequence, read N- to C-terminus: Large ribosomal subunit protein bL35 (59 aa).

Over residues 17-43 (GQIKRKHAYTSHLAPHKSTKQKRHLRK) the composition is skewed to basic residues. The interval 17–47 (GQIKRKHAYTSHLAPHKSTKQKRHLRKQATV) is disordered.

The protein belongs to the bacterial ribosomal protein bL35 family.

This chain is Large ribosomal subunit protein bL35, found in Mycoplasma genitalium (strain ATCC 33530 / DSM 19775 / NCTC 10195 / G37) (Mycoplasmoides genitalium).